The sequence spans 187 residues: 1,6-anhydro-N-acetylmuramyl-L-alanine amidase AmpD (187 aa).

The region spanning 30–167 is the N-acetylmuramoyl-L-alanine amidase domain; the sequence is LLVVHNISLP…APERKTDPGP (138 aa). Residue H34 participates in Zn(2+) binding. E116 acts as the Proton acceptor in catalysis. H154 and D164 together coordinate Zn(2+).

The protein belongs to the N-acetylmuramoyl-L-alanine amidase 2 family. Zn(2+) serves as cofactor.

The protein localises to the cytoplasm. The enzyme catalyses Hydrolyzes the link between N-acetylmuramoyl residues and L-amino acid residues in certain cell-wall glycopeptides.. Amidase activity is inhibited by metal chelators such as EDTA, dipicolinic acid or 1,10-phenanthroline. Functionally, involved in cell wall peptidoglycan recycling. Specifically cleaves the amide bond between the lactyl group of N-acetylmuramic acid and the alpha-amino group of the L-alanine in degradation products containing an anhydro N-acetylmuramyl moiety. Is also involved in beta-lactamase induction. The protein is 1,6-anhydro-N-acetylmuramyl-L-alanine amidase AmpD of Citrobacter freundii.